The sequence spans 75 residues: Large ribosomal subunit protein bL28c (75 aa).

It belongs to the bacterial ribosomal protein bL28 family.

The protein localises to the plastid. The protein resides in the chloroplast. This chain is Large ribosomal subunit protein bL28c, found in Cyanidioschyzon merolae (strain NIES-3377 / 10D) (Unicellular red alga).